The following is an 884-amino-acid chain: Alanine--tRNA ligase (884 aa).

Zn(2+) is bound by residues His570, His574, Cys676, and His680.

This sequence belongs to the class-II aminoacyl-tRNA synthetase family. It depends on Zn(2+) as a cofactor.

It is found in the cytoplasm. It carries out the reaction tRNA(Ala) + L-alanine + ATP = L-alanyl-tRNA(Ala) + AMP + diphosphate. Its function is as follows. Catalyzes the attachment of alanine to tRNA(Ala) in a two-step reaction: alanine is first activated by ATP to form Ala-AMP and then transferred to the acceptor end of tRNA(Ala). Also edits incorrectly charged Ser-tRNA(Ala) and Gly-tRNA(Ala) via its editing domain. This Lawsonia intracellularis (strain PHE/MN1-00) protein is Alanine--tRNA ligase.